The primary structure comprises 591 residues: V-type ATP synthase alpha chain (591 aa).

Residue 233–240 (GPFGAGKT) coordinates ATP.

This sequence belongs to the ATPase alpha/beta chains family.

It carries out the reaction ATP + H2O + 4 H(+)(in) = ADP + phosphate + 5 H(+)(out). Produces ATP from ADP in the presence of a proton gradient across the membrane. The V-type alpha chain is a catalytic subunit. The protein is V-type ATP synthase alpha chain of Streptococcus pyogenes serotype M5 (strain Manfredo).